Consider the following 181-residue polypeptide: Malignant T-cell-amplified sequence 2 (181 aa).

The 80-residue stretch at 92–171 folds into the PUA domain; it reads LPHQQVDKGA…IGIENIHYLN (80 aa).

This sequence belongs to the MCTS1 family.

Its subcellular location is the cytoplasm. The chain is Malignant T-cell-amplified sequence 2 from Mus musculus (Mouse).